An 84-amino-acid chain; its full sequence is Large ribosomal subunit protein bL31B (84 aa).

The protein belongs to the bacterial ribosomal protein bL31 family. Type B subfamily. In terms of assembly, part of the 50S ribosomal subunit.

This is Large ribosomal subunit protein bL31B from Bacteroides thetaiotaomicron (strain ATCC 29148 / DSM 2079 / JCM 5827 / CCUG 10774 / NCTC 10582 / VPI-5482 / E50).